Reading from the N-terminus, the 314-residue chain is Small ribosomal subunit biogenesis GTPase RsgA (314 aa).

Residues 1–21 (MKRAPTKQPAKPAARGGERAQ) are disordered. In terms of domain architecture, CP-type G spans 85 to 246 (SDQFKSKLFA…LIDSPGFQEF (162 aa)). GTP-binding positions include 134-137 (NKID) and 188-196 (GQSGMGKST). The Zn(2+) site is built by Cys-270, Cys-275, His-277, and Cys-283.

Belongs to the TRAFAC class YlqF/YawG GTPase family. RsgA subfamily. In terms of assembly, monomer. Associates with 30S ribosomal subunit, binds 16S rRNA. The cofactor is Zn(2+).

It localises to the cytoplasm. Its function is as follows. One of several proteins that assist in the late maturation steps of the functional core of the 30S ribosomal subunit. Helps release RbfA from mature subunits. May play a role in the assembly of ribosomal proteins into the subunit. Circularly permuted GTPase that catalyzes slow GTP hydrolysis, GTPase activity is stimulated by the 30S ribosomal subunit. This chain is Small ribosomal subunit biogenesis GTPase RsgA, found in Burkholderia pseudomallei (strain 1106a).